Here is a 55-residue protein sequence, read N- to C-terminus: Regulatory protein MokB (55 aa).

Functionally, overlapping regulatory peptide whose translation enables hokB expression. This is Regulatory protein MokB (mokB) from Escherichia coli (strain K12).